The chain runs to 107 residues: L-rhamnose mutarotase (107 aa).

Y18 contributes to the substrate binding site. The Proton donor role is filled by H22. Substrate contacts are provided by residues Y41 and 76–77; that span reads WW.

It belongs to the rhamnose mutarotase family. In terms of assembly, homodimer.

The protein localises to the cytoplasm. It catalyses the reaction alpha-L-rhamnose = beta-L-rhamnose. Its pathway is carbohydrate metabolism; L-rhamnose metabolism. Its function is as follows. Involved in the anomeric conversion of L-rhamnose. The polypeptide is L-rhamnose mutarotase (Paraburkholderia phytofirmans (strain DSM 17436 / LMG 22146 / PsJN) (Burkholderia phytofirmans)).